A 474-amino-acid chain; its full sequence is MAKKLYIKTFGCQMNEYDSKKMADVLRDAQHMEKTDDPAAADVILFNTCSVREKAQEKVFHDLGRVRHLKAANPDLLIGVGGCVASQEGAEIVKRAPYVDLVFGPQTLHRLPQMISTRQITGRPQVDISFPEIEKFDHLPPARTEGVTAFVSIMEGCSKYCSFCVVPYTRGEEISRPLDDILTEIAGLTNLGVKEVTLLGQNVNAYRGRMQYAEEGELADFALLLEYLHEIPGIERIRYTTSHPREFTPRLIEAYKASPKLVSHVHLPVQSGSDRILAAMKRGYTSLEYKSIIRRLRAARPDISITSDFIVGFPGETEADFEATMKLIEAVNFDGSFSFIYSSRPGTPAAGLEDTTPHQVKLERLQRLQEKVELQAQAISVRMVGTTQRVLVEGLSRKDPGELSGRTDNNRVVNFPGSPEMIGKFAELKITAALSHTLRGENVRADDAPIEPEAAIFRRYGAGPDSIGNRDNLT.

In terms of domain architecture, MTTase N-terminal spans 3–120 (KKLYIKTFGC…LPQMISTRQI (118 aa)). [4Fe-4S] cluster-binding residues include Cys12, Cys49, Cys83, Cys157, Cys161, and Cys164. A Radical SAM core domain is found at 143–382 (RTEGVTAFVS…ELQAQAISVR (240 aa)). In terms of domain architecture, TRAM spans 381–444 (VRMVGTTQRV…SHTLRGENVR (64 aa)).

It belongs to the methylthiotransferase family. MiaB subfamily. As to quaternary structure, monomer. Requires [4Fe-4S] cluster as cofactor.

Its subcellular location is the cytoplasm. The catalysed reaction is N(6)-dimethylallyladenosine(37) in tRNA + (sulfur carrier)-SH + AH2 + 2 S-adenosyl-L-methionine = 2-methylsulfanyl-N(6)-dimethylallyladenosine(37) in tRNA + (sulfur carrier)-H + 5'-deoxyadenosine + L-methionine + A + S-adenosyl-L-homocysteine + 2 H(+). Its function is as follows. Catalyzes the methylthiolation of N6-(dimethylallyl)adenosine (i(6)A), leading to the formation of 2-methylthio-N6-(dimethylallyl)adenosine (ms(2)i(6)A) at position 37 in tRNAs that read codons beginning with uridine. The sequence is that of tRNA-2-methylthio-N(6)-dimethylallyladenosine synthase from Nitrosospira multiformis (strain ATCC 25196 / NCIMB 11849 / C 71).